The chain runs to 367 residues: 4-hydroxy-3-methylbut-2-en-1-yl diphosphate synthase (flavodoxin) (367 aa).

[4Fe-4S] cluster is bound by residues Cys268, Cys271, Cys303, and Glu310.

The protein belongs to the IspG family. The cofactor is [4Fe-4S] cluster.

The catalysed reaction is (2E)-4-hydroxy-3-methylbut-2-enyl diphosphate + oxidized [flavodoxin] + H2O + 2 H(+) = 2-C-methyl-D-erythritol 2,4-cyclic diphosphate + reduced [flavodoxin]. Its pathway is isoprenoid biosynthesis; isopentenyl diphosphate biosynthesis via DXP pathway; isopentenyl diphosphate from 1-deoxy-D-xylulose 5-phosphate: step 5/6. Converts 2C-methyl-D-erythritol 2,4-cyclodiphosphate (ME-2,4cPP) into 1-hydroxy-2-methyl-2-(E)-butenyl 4-diphosphate. The chain is 4-hydroxy-3-methylbut-2-en-1-yl diphosphate synthase (flavodoxin) from Halalkalibacterium halodurans (strain ATCC BAA-125 / DSM 18197 / FERM 7344 / JCM 9153 / C-125) (Bacillus halodurans).